The sequence spans 128 residues: Cytochrome c' (128 aa).

The heme c site is built by Gln13, Gln17, Glu69, Thr70, Cys118, Cys121, and His122.

Post-translationally, binds 1 heme c group covalently per subunit.

Functionally, cytochrome c' is the most widely occurring bacterial c-type cytochrome. Cytochromes c' are high-spin proteins and the heme has no sixth ligand. Their exact function is not known. The polypeptide is Cytochrome c' (Magnetospirillum fulvum (Rhodospirillum fulvum)).